The sequence spans 213 residues: Adenylate kinase (213 aa).

ATP is bound at residue 10-15; it reads GAGKGT. Residues 30–59 form an NMP region; sequence STGDMFRAAIKEGTEMGKKAKEYMDKGALV. Residues T31, R36, 57–59, 85–88, and Q92 each bind AMP; these read ALV and GFPR. Positions 126–163 are LID; it reads GRRVCKNCGASYHVIFNPPQAEGKCNSCNGELYQRSDD. R127 is an ATP binding site. Residues C130 and C133 each contribute to the Zn(2+) site. 136 to 137 is an ATP binding site; it reads SY. C150 and C153 together coordinate Zn(2+). Positions 160 and 171 each coordinate AMP. Position 199 (Q199) interacts with ATP.

It belongs to the adenylate kinase family. Monomer.

It localises to the cytoplasm. The enzyme catalyses AMP + ATP = 2 ADP. The protein operates within purine metabolism; AMP biosynthesis via salvage pathway; AMP from ADP: step 1/1. Its function is as follows. Catalyzes the reversible transfer of the terminal phosphate group between ATP and AMP. Plays an important role in cellular energy homeostasis and in adenine nucleotide metabolism. This chain is Adenylate kinase, found in Desulforamulus reducens (strain ATCC BAA-1160 / DSM 100696 / MI-1) (Desulfotomaculum reducens).